Consider the following 325-residue polypeptide: tRNA dimethylallyltransferase (325 aa).

Residue Gly21–Ser28 participates in ATP binding. Position 23 to 28 (Thr23 to Ser28) interacts with substrate. The interaction with substrate tRNA stretch occupies residues Gln166 to Arg170.

The protein belongs to the IPP transferase family. Monomer. The cofactor is Mg(2+).

The enzyme catalyses adenosine(37) in tRNA + dimethylallyl diphosphate = N(6)-dimethylallyladenosine(37) in tRNA + diphosphate. Its function is as follows. Catalyzes the transfer of a dimethylallyl group onto the adenine at position 37 in tRNAs that read codons beginning with uridine, leading to the formation of N6-(dimethylallyl)adenosine (i(6)A). This chain is tRNA dimethylallyltransferase, found in Acidiphilium cryptum (strain JF-5).